The chain runs to 313 residues: Ribosomal RNA small subunit methyltransferase H (313 aa).

S-adenosyl-L-methionine-binding positions include 34–36 (GGH), Asp-53, Phe-80, Asp-101, and Gln-108.

The protein belongs to the methyltransferase superfamily. RsmH family.

It localises to the cytoplasm. The catalysed reaction is cytidine(1402) in 16S rRNA + S-adenosyl-L-methionine = N(4)-methylcytidine(1402) in 16S rRNA + S-adenosyl-L-homocysteine + H(+). In terms of biological role, specifically methylates the N4 position of cytidine in position 1402 (C1402) of 16S rRNA. This Lacticaseibacillus casei (strain BL23) (Lactobacillus casei) protein is Ribosomal RNA small subunit methyltransferase H.